A 346-amino-acid polypeptide reads, in one-letter code: GTPase Obg (346 aa).

The Obg domain maps to 1–158; that stretch reads MFIDKAKIYV…RWIELELKLL (158 aa). The region spanning 159 to 330 is the OBG-type G domain; sequence ADVGIIGFPN…LINLIRETRD (172 aa). Residues 165 to 172, 190 to 194, 212 to 215, 282 to 285, and 311 to 313 each bind GTP; these read GFPNAGKS, FTTLT, DIPG, NKID, and SLI. Mg(2+)-binding residues include serine 172 and threonine 192.

The protein belongs to the TRAFAC class OBG-HflX-like GTPase superfamily. OBG GTPase family. In terms of assembly, monomer. It depends on Mg(2+) as a cofactor.

The protein resides in the cytoplasm. In terms of biological role, an essential GTPase which binds GTP, GDP and possibly (p)ppGpp with moderate affinity, with high nucleotide exchange rates and a fairly low GTP hydrolysis rate. Plays a role in control of the cell cycle, stress response, ribosome biogenesis and in those bacteria that undergo differentiation, in morphogenesis control. The chain is GTPase Obg from Sulfurihydrogenibium sp. (strain YO3AOP1).